The chain runs to 315 residues: Probable integrase/recombinase aq_aa09 (315 aa).

Positions 1–78 (MEHFIDTYLY…EVRLFYEWLQ (78 aa)) constitute a Core-binding (CB) domain. In terms of domain architecture, Tyr recombinase spans 106–313 (SKKKYYSDDE…REKQLEAILE (208 aa)). Residues arginine 150, lysine 186, histidine 263, arginine 266, and histidine 289 contribute to the active site. Residue tyrosine 299 is the O-(3'-phospho-DNA)-tyrosine intermediate of the active site.

The protein belongs to the 'phage' integrase family.

Its function is as follows. May function as an integrase. The polypeptide is Probable integrase/recombinase aq_aa09 (Aquifex aeolicus (strain VF5)).